Reading from the N-terminus, the 567-residue chain is Thiol:disulfide interchange protein DsbD (567 aa).

The first 19 residues, 1–19 (MAQRIFTLILLLCSTSAFA), serve as a signal peptide directing secretion. 2 disulfide bridges follow: Cys122-Cys128 and Cys185-Cys307. 8 helical membrane-spanning segments follow: residues 166–186 (LPFSALWALLIGIGIAFTPCV), 210–230 (LLLAFIYVQGMALTYTALGLV), 246–266 (YVLIGLAIVFTLLALSMFGLF), 299–319 (IAGLICSPCTTAPLSAILLYI), 326–346 (WLGGGTLYLYALGMGLPLMLV), 360–380 (WMAHVKTAFGFVILALPVFLL), 387–407 (AWGLRLWSLLGVAFFGWAFIT), and 418–438 (IVQIILLAAALISVRPLQDWA). A Thioredoxin domain is found at 435 to 567 (QDWAFGSPSA…FSAHLHDRQP (133 aa)). Cysteines 482 and 485 form a disulfide.

This sequence belongs to the thioredoxin family. DsbD subfamily.

The protein localises to the cell inner membrane. It carries out the reaction [protein]-dithiol + NAD(+) = [protein]-disulfide + NADH + H(+). It catalyses the reaction [protein]-dithiol + NADP(+) = [protein]-disulfide + NADPH + H(+). Required to facilitate the formation of correct disulfide bonds in some periplasmic proteins and for the assembly of the periplasmic c-type cytochromes. Acts by transferring electrons from cytoplasmic thioredoxin to the periplasm. This transfer involves a cascade of disulfide bond formation and reduction steps. This chain is Thiol:disulfide interchange protein DsbD, found in Salmonella choleraesuis (strain SC-B67).